Consider the following 123-residue polypeptide: Large ribosomal subunit protein bL12 (123 aa).

It belongs to the bacterial ribosomal protein bL12 family. Homodimer. Part of the ribosomal stalk of the 50S ribosomal subunit. Forms a multimeric L10(L12)X complex, where L10 forms an elongated spine to which 2 to 4 L12 dimers bind in a sequential fashion. Binds GTP-bound translation factors.

Forms part of the ribosomal stalk which helps the ribosome interact with GTP-bound translation factors. Is thus essential for accurate translation. The polypeptide is Large ribosomal subunit protein bL12 (Rhodopseudomonas palustris (strain BisB18)).